The sequence spans 35 residues: Alpha-amanitin proprotein 2 (35 aa).

Positions 1–10 (MFDTNSTRLP) are excised as a propeptide. At Ile11 the chain carries (3R,4R)-4,5-dihydroxyisoleucine; in form alpha-amanitin. A (3R,4S)-4-hydroxyisoleucine; in form gamma-amanitin modification is found at Ile11. Residues 11-18 (IWGIGCNP) constitute a cross-link (cyclopeptide (Ile-Pro)). Positions 12 to 16 (WGIGC) form a cross-link, 2'-cysteinyl-6'-hydroxytryptophan sulfoxide (Trp-Cys). Pro18 bears the 4-hydroxyproline mark. Residues 19–35 (WTAEHVDQTLVSGNDIC) constitute a propeptide that is removed on maturation.

The protein belongs to the MSDIN fungal toxin family. Processed by the macrocyclase-peptidase enzyme POPB to yield a toxic bicyclic octapeptide. POPB first removes 10 residues from the N-terminus. Conformational trapping of the remaining peptide forces the enzyme to release this intermediate rather than proceed to macrocyclization. The enzyme rebinds the remaining peptide in a different conformation and catalyzes macrocyclization of the N-terminal 8 residues.

In terms of biological role, major toxin belonging to the bicyclic octapeptides amatoxins that acts by binding non-competitively to RNA polymerase II and greatly slowing the elongation of transcripts from target promoters. The polypeptide is Alpha-amanitin proprotein 2 (Galerina marginata (strain CBS 339.88)).